The chain runs to 253 residues: Triosephosphate isomerase (253 aa).

12–14 (NWK) serves as a coordination point for substrate. His100 acts as the Electrophile in catalysis. Glu170 serves as the catalytic Proton acceptor. Residues Gly176, Ser215, and 236–237 (GG) each bind substrate.

It belongs to the triosephosphate isomerase family. In terms of assembly, homodimer.

Its subcellular location is the cytoplasm. It catalyses the reaction D-glyceraldehyde 3-phosphate = dihydroxyacetone phosphate. It participates in carbohydrate biosynthesis; gluconeogenesis. The protein operates within carbohydrate degradation; glycolysis; D-glyceraldehyde 3-phosphate from glycerone phosphate: step 1/1. Its function is as follows. Involved in the gluconeogenesis. Catalyzes stereospecifically the conversion of dihydroxyacetone phosphate (DHAP) to D-glyceraldehyde-3-phosphate (G3P). This Rhodopseudomonas palustris (strain BisA53) protein is Triosephosphate isomerase.